A 222-amino-acid polypeptide reads, in one-letter code: Probable transaldolase (222 aa).

Lysine 83 (schiff-base intermediate with substrate) is an active-site residue.

This sequence belongs to the transaldolase family. Type 3B subfamily.

Its subcellular location is the cytoplasm. It catalyses the reaction D-sedoheptulose 7-phosphate + D-glyceraldehyde 3-phosphate = D-erythrose 4-phosphate + beta-D-fructose 6-phosphate. It functions in the pathway carbohydrate degradation; pentose phosphate pathway; D-glyceraldehyde 3-phosphate and beta-D-fructose 6-phosphate from D-ribose 5-phosphate and D-xylulose 5-phosphate (non-oxidative stage): step 2/3. Transaldolase is important for the balance of metabolites in the pentose-phosphate pathway. The chain is Probable transaldolase from Nitrosopumilus maritimus (strain SCM1).